Consider the following 509-residue polypeptide: Transcription factor SOX-9 (509 aa).

2 disordered regions span residues 1-67 and 160-273; these read MNLL…SEED and RLRV…FRDV. Positions 30-41 are enriched in low complexity; it reads SAGSPCPSGSGS. Polar residues predominate over residues 42-52; it reads DTENTRPQENT. Composition is skewed to basic and acidic residues over residues 56–67 and 160–174; these read GEPDLKKESEED and RLRV…DYKY. Residues 63–103 form a dimerization (DIM) region; the sequence is ESEEDKFPVCIREAVSQVLKGYDWTLVPMPVRVNGSSKNKP. The interval 63–103 is PQA; that stretch reads ESEEDKFPVCIREAVSQVLKGYDWTLVPMPVRVNGSSKNKP. Residue Ser-64 is modified to Phosphoserine. Positions 105 to 173 form a DNA-binding region, HMG box; it reads VKRPMNAFMV…QHKKDHPDYK (69 aa). At Ser-211 the chain carries Phosphoserine. A transactivation domain (TAM) region spans residues 224–307; it reads PGEHSGQSQG…LPPNGHPGVP (84 aa). 2 short sequence motifs (9aaTAD) span residues 275 to 284 and 290 to 298; these read IGELSSDVIS and DVNEFDQYL. Residues 334 to 415 form a disordered region; the sequence is VWMSKQQAPP…HYSEQQQHSP (82 aa). The span at 341–376 shows a compositional bias: pro residues; it reads APPPPPQQPPQAPPAPQAPPQPQAAPPQQPAAPPQQ. The segment covering 380–415 has biased composition (polar residues); it reads HTLTTLSSEPGQSQRTHIKTEQLSPSHYSEQQQHSP. The transactivation domain (TAC) stretch occupies residues 394 to 509; sequence RTHIKTEQLS…QPVYTQLTRP (116 aa). Lys-398 is covalently cross-linked (Glycyl lysine isopeptide (Lys-Gly) (interchain with G-Cter in ubiquitin)). Residues 460–468 carry the 9aaTAD 3 motif; that stretch reads TGLYSTFTY. The segment at 479-509 is disordered; sequence PIADTSGVPSIPQTHSPQHWEQPVYTQLTRP. Residues 485–509 show a composition bias toward polar residues; sequence GVPSIPQTHSPQHWEQPVYTQLTRP.

In terms of assembly, homodimer; homodimerization is required for activity. Interacts (via C-terminus) with ZNF219; forming a complex that binds to the COL2A1 promoter and activates COL2A1 expression. Interacts with DDRGK1. Interacts with EP300/p300. Interacts with beta-catenin (CTNNB1); inhibiting CTNNB1 activity by competing with the binding sites of TCF/LEF within CTNNB1. Post-translationally, acetylated; acetylation impairs nuclear localization and ability to transactivate expression of target genes. Deacetylated by SIRT1. Phosphorylation at Ser-64 and Ser-211 by PKA increases transcriptional activity and may help delay chondrocyte maturation downstream of PTHLH/PTHrP signaling. Phosphorylation at either Ser-64 or Ser-211 is required for sumoylation, but phosphorylation is not dependent on sumoylation. Phosphorylated on tyrosine residues; tyrosine dephosphorylation by PTPN11/SHP2 blocks SOX9 phosphorylation by PKA and subsequent SUMOylation. In terms of processing, sumoylated; phosphorylation at either Ser-64 or Ser-211 is required for sumoylation. Sumoylation is induced by BMP signaling pathway. Post-translationally, ubiquitinated; ubiquitination leads to proteasomal degradation and is negatively regulated by DDRGK1.

The protein localises to the nucleus. In terms of biological role, transcription factor that plays a key role in chondrocytes differentiation and skeletal development. Specifically binds the 5'-ACAAAG-3' DNA motif present in enhancers and super-enhancers and promotes expression of genes important for chondrogenesis, including cartilage matrix protein-coding genes COL2A1, COL4A2, COL9A1, COL11A2 and ACAN, SOX5 and SOX6. Also binds to some promoter regions. Plays a central role in successive steps of chondrocyte differentiation. Absolutely required for precartilaginous condensation, the first step in chondrogenesis during which skeletal progenitors differentiate into prechondrocytes. Together with SOX5 and SOX6, required for overt chondrogenesis when condensed prechondrocytes differentiate into early stage chondrocytes, the second step in chondrogenesis. Later, required to direct hypertrophic maturation and block osteoblast differentiation of growth plate chondrocytes: maintains chondrocyte columnar proliferation, delays prehypertrophy and then prevents osteoblastic differentiation of chondrocytes by lowering beta-catenin (CTNNB1) signaling and RUNX2 expression. Also required for chondrocyte hypertrophy, both indirectly, by keeping the lineage fate of chondrocytes, and directly, by remaining present in upper hypertrophic cells and transactivating COL10A1 along with MEF2C. Low lipid levels are the main nutritional determinant for chondrogenic commitment of skeletal progenitor cells: when lipids levels are low, FOXO (FOXO1 and FOXO3) transcription factors promote expression of SOX9, which induces chondrogenic commitment and suppresses fatty acid oxidation. Mechanistically, helps, but is not required, to remove epigenetic signatures of transcriptional repression and deposit active promoter and enhancer marks at chondrocyte-specific genes. Acts in cooperation with the Hedgehog pathway-dependent GLI (GLI1 and GLI3) transcription factors. In addition to cartilage development, also acts as a regulator of proliferation and differentiation in epithelial stem/progenitor cells: involved in the lung epithelium during branching morphogenesis, by balancing proliferation and differentiation and regulating the extracellular matrix. Controls epithelial branching during kidney development. The protein is Transcription factor SOX-9 (SOX9) of Callithrix jacchus (White-tufted-ear marmoset).